We begin with the raw amino-acid sequence, 52 residues long: Conotoxin Cal6.25 (52 aa).

The first 22 residues, 1-22, serve as a signal peptide directing secretion; it reads MKLTHVLIVAVLVLTVCHLTMA. 3 disulfide bridges follow: C24–C41, C31–C45, and C40–C50.

In terms of tissue distribution, expressed by the venom duct.

The protein localises to the secreted. Functionally, probable neurotoxin. This chain is Conotoxin Cal6.25, found in Californiconus californicus (California cone).